The sequence spans 758 residues: Vitamin K-dependent gamma-carboxylase (758 aa).

A disordered region spans residues 1–31 (MAVSARSARSPPDSDKVQKDKAGQTSGRRQG). N-acetylalanine is present on Ala2. Residues 2-60 (AVSARSARSPPDSDKVQKDKAGQTSGRRQGSRMGKLLGFEWTDVSSWGKLVTLLNRPTD) lie on the Cytoplasmic side of the membrane. The segment covering 12-22 (PDSDKVQKDKA) has biased composition (basic and acidic residues). Residues 61 to 81 (PASLAVFRFLFGLMMVLDIPQ) form a helical membrane-spanning segment. Topologically, residues 82–113 (ERGLSSLDRRYLDGLEVCRFPLLDALQPLPLD) are lumenal. A disulfide bridge links Cys99 with Cys450. A helical transmembrane segment spans residues 114 to 134 (WMYLVYTIMFLGALGMMLGLR). At 135-136 (YR) the chain is on the cytoplasmic side. Residues 137 to 157 (ISCVLFLLPYWYVFLLDKTSW) form a helical membrane-spanning segment. The Lumenal segment spans residues 158-292 (NNHSYLYGLL…VSYFHCMNSQ (135 aa)). Residues 293 to 313 (LFSIGMFPYVMLASSPLFCSP) traverse the membrane as a helical segment. Over 314 to 361 (EWPRKLVAHCPKRLQELLPLRTAPQPSASCVYKRSRAKGGQKPGLRHR) the chain is Cytoplasmic. A helical transmembrane segment spans residues 362 to 382 (LGAAFTLLYLLEQLFLPYSHF). Topologically, residues 383–758 (LTQGYNNWTN…PNADAVHSEF (376 aa)) are lumenal. The interval 727–758 (PFEPVGEPSPSNTDSSNPNPSEPNADAVHSEF) is disordered. Over residues 734-750 (PSPSNTDSSNPNPSEPN) the composition is skewed to low complexity.

Belongs to the vitamin K-dependent gamma-carboxylase family. In terms of assembly, monomer. May interact with CALU.

Its subcellular location is the endoplasmic reticulum membrane. It catalyses the reaction 4-carboxy-L-glutamyl-[protein] + 2,3-epoxyphylloquinone + H2O + H(+) = phylloquinol + L-glutamyl-[protein] + CO2 + O2. In terms of biological role, mediates the vitamin K-dependent carboxylation of glutamate residues to calcium-binding gamma-carboxyglutamate (Gla) residues with the concomitant conversion of the reduced hydroquinone form of vitamin K to vitamin K epoxide. Catalyzes gamma-carboxylation of various proteins, such as blood coagulation factors (F2, F7, F9 and F10), osteocalcin (BGLAP) or matrix Gla protein (MGP). This is Vitamin K-dependent gamma-carboxylase (GGCX) from Delphinapterus leucas (Beluga whale).